The sequence spans 85 residues: Antibacterial factor-related peptide 2 (85 aa).

The signal sequence occupies residues 1 to 17 (MFVRSLFLALLLATIVA). A propeptide spanning residues 82–85 (IKRG) is cleaved from the precursor.

As to expression, expressed in the pharynx (at protein level). Detected in pharyngeal neurons and secretory cells.

It is found in the secreted. In terms of biological role, exhibits antimicrobial activity against the Gram-positive bacteria B.subtilis IFO 3134, K.varians MAFF 118076 and S.aureus ATCC 6538P, the Gram-negative bacteria A.tumefaciens MAFF 1001, B.bacteriovorus MAFF 106101 and K.pneumoniae MAFF 519002, and the yeasts C.krusei MAFF 114085, K.thermotolerans MAFF 113848 and T.delbrueckii MAFF 113811. In Caenorhabditis elegans, this protein is Antibacterial factor-related peptide 2.